The chain runs to 365 residues: MTPSSSGLEQSEIDAIQELEQTSRNDTLLKYHDICIDEGVIEQDVDMSCFSANSVGEWIVELIYQNNIKKLIMGATADSHYSEGMVHITPTKADYVIQHAPHCCNIWLVCNGNLIQTREGRFEHAGSAYSSSSSLHSIDSALIPYGGAGRAERVTEPHALSSSEEQSARGIEKMYYEEQRRRLEIEELKREKEQRDKMRRVREEALSSSSGVTKILYNEEVMRRREVEAELNRAKAEIEDMKRVQIELKEQHYADCRLLEKERDEAIKTTEELLRALEKGESSIPLQWSVSIEPPQCFICPISKDIMQNPHVAADGYTYEADEFRRWLNHGGEKSPMTNLRLENRNLIPNLVLRSAIKDWLQQHP.

A coiled-coil region spans residues 176–281 (YEEQRRRLEI…ELLRALEKGE (106 aa)). The U-box domain maps to 293 to 365 (EPPQCFICPI…AIKDWLQQHP (73 aa)).

It catalyses the reaction S-ubiquitinyl-[E2 ubiquitin-conjugating enzyme]-L-cysteine + [acceptor protein]-L-lysine = [E2 ubiquitin-conjugating enzyme]-L-cysteine + N(6)-ubiquitinyl-[acceptor protein]-L-lysine.. Its pathway is protein modification; protein ubiquitination. Functions as an E3 ubiquitin ligase. The sequence is that of U-box domain-containing protein 56 (PUB56) from Arabidopsis thaliana (Mouse-ear cress).